Consider the following 1192-residue polypeptide: DNA topoisomerase 2 (1192 aa).

ATP-binding positions include Asn-64, Asn-95, and 142 to 149 (GTNGVGLK). The Mg(2+) site is built by Glu-438, Asp-539, and Asp-541. Residues 707–1174 (IPNFLDGMTR…PGASVWLEEI (468 aa)) form the Topo IIA-type catalytic domain. The active-site O-(5'-phospho-DNA)-tyrosine intermediate is the Tyr-800.

This sequence belongs to the type II topoisomerase family. Mg(2+) is required as a cofactor. Mn(2+) serves as cofactor. Requires Ca(2+) as cofactor.

The protein localises to the host cytoplasm. It carries out the reaction ATP-dependent breakage, passage and rejoining of double-stranded DNA.. Functionally, type II topoisomerase. Processively relaxes supercoiled DNA. Displays DNA-supercoiling activity only when associated with the viral histone-like protein. In Ornithodoros (relapsing fever ticks), this protein is DNA topoisomerase 2.